The following is a 454-amino-acid chain: Bifunctional protein GlmU (454 aa).

The tract at residues 1–227 is pyrophosphorylase; it reads MTQLSVVILA…FMEVEGANNR (227 aa). Residues 9-12, lysine 23, glutamine 74, 79-80, 101-103, glycine 138, glutamate 152, asparagine 167, and asparagine 225 contribute to the UDP-N-acetyl-alpha-D-glucosamine site; these read LAAG, GT, and YGD. Residue aspartate 103 participates in Mg(2+) binding. Position 225 (asparagine 225) interacts with Mg(2+). The tract at residues 228–248 is linker; the sequence is LQLAALERFYQKTQAEKLLLA. Residues 249-454 form an N-acetyltransferase region; sequence GVRLIDPARF…QGWQRPTKKK (206 aa). UDP-N-acetyl-alpha-D-glucosamine-binding residues include arginine 331 and lysine 349. Catalysis depends on histidine 361, which acts as the Proton acceptor. Tyrosine 364 and asparagine 375 together coordinate UDP-N-acetyl-alpha-D-glucosamine. Acetyl-CoA-binding positions include alanine 378, 384-385, serine 403, alanine 421, and arginine 438; that span reads NY.

The protein in the N-terminal section; belongs to the N-acetylglucosamine-1-phosphate uridyltransferase family. It in the C-terminal section; belongs to the transferase hexapeptide repeat family. As to quaternary structure, homotrimer. It depends on Mg(2+) as a cofactor.

The protein localises to the cytoplasm. The catalysed reaction is alpha-D-glucosamine 1-phosphate + acetyl-CoA = N-acetyl-alpha-D-glucosamine 1-phosphate + CoA + H(+). It carries out the reaction N-acetyl-alpha-D-glucosamine 1-phosphate + UTP + H(+) = UDP-N-acetyl-alpha-D-glucosamine + diphosphate. Its pathway is nucleotide-sugar biosynthesis; UDP-N-acetyl-alpha-D-glucosamine biosynthesis; N-acetyl-alpha-D-glucosamine 1-phosphate from alpha-D-glucosamine 6-phosphate (route II): step 2/2. It functions in the pathway nucleotide-sugar biosynthesis; UDP-N-acetyl-alpha-D-glucosamine biosynthesis; UDP-N-acetyl-alpha-D-glucosamine from N-acetyl-alpha-D-glucosamine 1-phosphate: step 1/1. The protein operates within bacterial outer membrane biogenesis; LPS lipid A biosynthesis. Functionally, catalyzes the last two sequential reactions in the de novo biosynthetic pathway for UDP-N-acetylglucosamine (UDP-GlcNAc). The C-terminal domain catalyzes the transfer of acetyl group from acetyl coenzyme A to glucosamine-1-phosphate (GlcN-1-P) to produce N-acetylglucosamine-1-phosphate (GlcNAc-1-P), which is converted into UDP-GlcNAc by the transfer of uridine 5-monophosphate (from uridine 5-triphosphate), a reaction catalyzed by the N-terminal domain. The protein is Bifunctional protein GlmU of Actinobacillus pleuropneumoniae serotype 3 (strain JL03).